Here is a 269-residue protein sequence, read N- to C-terminus: MAAAGRRGLLLLFVLWMMVTVILPASGEGGWKQNGLGIAAAVMEEERCTVERRAHITYSEFMQHYAFLKPVILQGLTDNSKFRALCSRENLLASFGDNIVRLSTANTYSYQKVDLPFQEYVEQLLQPQDPASLGNDTLYFFGDNNFTEWASLFQHYSPPPFRLLGTTPAYSFGIAGAGSGVPFHWHGPGFSEVIYGRKRWFLYPPEKTPEFHPNKTTLAWLLEIYPSLALSARPLECTIQAGEVLYFPDRWWHATLNLDTSVFISTFLG.

The N-terminal stretch at 1–24 (MAAAGRRGLLLLFVLWMMVTVILP) is a signal peptide. Residues Asn-135, Asn-145, and Asn-214 are each glycosylated (N-linked (GlcNAc...) asparagine). Residues 136–269 (DTLYFFGDNN…TSVFISTFLG (134 aa)) form the JmjC domain.

In terms of assembly, oligomer. Dimer. Interacts with PKM; regulates angiogenesis and metabolism. N-glycosylated.

The protein localises to the endoplasmic reticulum lumen. It is found in the cytoplasm. Its function is as follows. Functions as a positive regulator of TNF-induced NF-kappaB signaling. Regulates angiogenesis and cellular metabolism through interaction with PKM. The polypeptide is JmjC domain-containing protein 8 (Mus musculus (Mouse)).